The chain runs to 2469 residues: MDIHPLFKKLNLEGIASTHQADEKYGQYAGSQCLSNCVMFLVSSYYNDETPVTSLHGLNEILKYGAKIDFILRRSGQLGHNQYAQLHHIPGYIAGPKWACFIYQSIEMFGMLGHESPINEPFVASLKSLLSKNYNTTVQYFLAICNSKSMGILIKDKKIFIFDPHSCPLVPNSPAHVFSTSNVNDAIEYLSPPNVQYTGSFLYFVPKEYIGHSHYIMNHYRVINYEKLHGPNIDLTSQEGLIIEISPPNTPKPTSTQKPPKTPRTPKPATPKAPKTPRKPKTPKESTIPYDKSKKPPKIPKTSKKSKKVLTKDTALTPQHKTIEEHLRELLPPITETVEDNTLFNHPVERTTPGTDSLLSGINSTTKREDDLEDDDNVTSKLKEDEDDWIDDIPIPEVLDTETTHSDQETIYMIGDENIHDWSYSDDDIDDTLDISFIQLDNLITSLDNIPKNNTFPRIIDKTSNQPIKEGKALHSIDRILKNIVLEHGLITSSSISISKCKSLLQFVILWGEKLSIPTRDLKTILKTELIITEIAEIALTKLTNDTFRNNVITKLNKCMLKLKSESVDSYKHLSALLNNIILKIQTIDTEIELKTLSTVFTSELGKDFSVVCTKKESETIMAAIKNLKEKISTRKQELHTEENYFQSVLIAMETFQPIPLPTRVIEIQPSKKAQQLHEKSKLVEQKLTIDANNVLTDLLHTMKQDKTDISPAPDFTTVLKNIQSTLQLLQTCVTDLNIDKKFISNTVQQLSYIGWEVAELSHSQWNFPKADPVIPLKILDDIKKEIQQVTTKQKNEETLSKILADVQTLLENAKQSDTLSIPILQHYITKAGTLVGERENQKFESLKNTVQKLSTSEEFLKTLIDSTTLENVQLQIQEISDILQSNQYIHQSETIKQAFFDKSNTIINNILQLINQQKYTTVTQPMLIAVKRFLSEAKFRESNTICEIISTLVSLGSLLSKSTTVEALKDALKSIDTLKEKLTAVDRPLKRELYNVIRKLQKQLKTLLEQQEFDNWKMEVDSFVPTPSRDVKTFIQNAPSMKAKQYAKKALKDQIQAMEIDVDPESVIEDNIKANGQKAWQKIQSAFQDLNFSILIPDDWLSLAKEYTRPKSTLFTVIGPILLKFVEEVLESVKNLKEAKLKSLLPNGPVFTPPKFDWIHYYESNVNFHLKTINLPKVSTVAHNIGHELSLLSQALNSKTLPEAVVGTSLEQHAAKFSCMFKTLEATWHDHQVDTRTKIDEYIEDLRNDTKKHIVAPQIQSPNRFLSPEDIQEINSLPKLFRDSLLENESRLLASQKNEFQMLENTVKAAELQYKATQEDIISNMSEAINSLLPLAPAYILAIPTIPTDPLKYVENIIQDKRLLNTEPYQITIECLNWLNTACKTLLSICPKSQKQRLVVLDQSINTHLNITQQFYNLEKTANTTDDLSVLQNAISTLDLKRVQGGKATVDSWQSKLQQMKAMLDNISKSAQTLASLDILWGTALTSVSTAHLGELLQKADPLQKDIESLSSTNTDLLSRVTELIHFIKFKRGFLSYYEEGQKEVFQRYPLTQNIRPSQPTEINNLLRLALFVLLKNKDASAWIWTETLPLVDSNKLAYVPPNKGPLYTCSQYLKLLEAQLLDPSLSKVILSDNRPLAGIAQARLGIDSTVLLARAFPDIQKHAEEVLTAYKNSIVSHTQNEFMAMTIVCHMIKIIMNDFYPQNFNINTVPIYVNHTKLLQIILTMWPRLIKASLCQQSFQEATSLLQTTLKPLFLKITDLTLENNIYNPASHCSDALLFFPQKWKSINIQSIMWEHPSFLAICKNKSRARITFLALAFKIIDPTILNQLWTSLNPANTSDSTSYSLLLNHLVATEFDKNVPSTFLEPGNPSLAYAYGTQTGNIIGTKSYVPQKSPPISVTAFEIALGALIFQVPVKLFVTDKTPVLSSPELGDMLIVSELLDCTGTTEPFKTMIEAPKSSLSTNLNKQYVSPPHELEVFSRQASWLQHILSSSNFKNNIVATIDYSTTFLNAYVVPEKLPFKQESFCFIPKIDSLQWPNNTFTTFLPLVEMPSNIELHYAKVTEPFNKTVLSTMFNVFPTHILPTQEEHDQSISSKSPTFKIEHDYNTNSVYNNHINNINLTNNSTYHQYKDVLPQPLADKLSYEPKDLQNLASTTEPQIEDIFSELSIKETDNTAKAPLLYPQKQPKTKKFLSPVHTKHKTSNSIIFEENTTVKVQPNTCIQHSDLHKDTNTPRQQISNAPCFIPNHKVPVIIKPSQEKLKANTVHTNTDDLSPKKPQILIANNNNIFKQSDKQHKHQYTQISKPKIFINQDSNNPIKQPHHNPPQPLIKPTDPQQLTLSNDIISSDQTTKNLNVQRKPIIVIPNNNYALNQVQKLSNLPSIKTKPYITLKDIQSNSKTLYDESPITIPILEHLDIEPIVSISYLEKRVDETKFIILEFIKHTKQNIIKTTNLLIHQIMKIKTLYL.

A deubiquitination activity region spans residues 1 to 237 (MDIHPLFKKL…LHGPNIDLTS (237 aa)). The region spanning 13-225 (EGIASTHQAD…IMNHYRVINY (213 aa)) is the Peptidase C76 domain. Active-site residues include C33, D163, and H165. Disordered stretches follow at residues 244-318 (EISP…ALTP) and 346-377 (HPVERTTPGTDSLLSGINSTTKREDDLEDDDN). The segment covering 260 to 271 (PKTPRTPKPATP) has biased composition (pro residues). Position 286 (S286) is a region of interest, interaction with inner tegument protein. The span at 295-309 (KPPKIPKTSKKSKKV) shows a compositional bias: basic residues. Polar residues predominate over residues 352–365 (TPGTDSLLSGINST).

Belongs to the herpesviridae large tegument protein family. In terms of assembly, interacts with host CUL1 and CUL4A; these interactions inhibit the E3 ligase activity of cullins. Interacts with inner tegument protein. Interacts with capsid vertex specific component CVC2. Interacts with the major capsid protein/MCP.

It localises to the virion tegument. Its subcellular location is the host cytoplasm. The protein resides in the host nucleus. It carries out the reaction Thiol-dependent hydrolysis of ester, thioester, amide, peptide and isopeptide bonds formed by the C-terminal Gly of ubiquitin (a 76-residue protein attached to proteins as an intracellular targeting signal).. In terms of biological role, large tegument protein that plays multiple roles in the viral cycle. During viral entry, remains associated with the capsid while most of the tegument is detached and participates in the capsid transport toward the host nucleus. Plays a role in the routing of the capsid at the nuclear pore complex and subsequent uncoating. Within the host nucleus, acts as a deneddylase and promotes the degradation of nuclear CRLs (cullin-RING ubiquitin ligases) and thereby stabilizes nuclear CRL substrates, while cytoplasmic CRLs remain unaffected. These modifications prevent host cell cycle S-phase progression and create a favorable environment allowing efficient viral genome replication. Participates later in the secondary envelopment of capsids. Indeed, plays a linker role for the association of the outer viral tegument to the capsids together with the inner tegument protein. The sequence is that of Large tegument protein deneddylase (64) from Saimiriine herpesvirus 2 (strain 11) (SaHV-2).